Consider the following 747-residue polypeptide: Beta-glucosidase BoGH3A (747 aa).

Residues 1 to 26 form the signal peptide; it reads MIIGIMKTFLLTICFLSVQTGMVAIA. Residue aspartate 273 is part of the active site.

It belongs to the glycosyl hydrolase 3 family.

The protein localises to the periplasm. The enzyme catalyses Hydrolysis of terminal, non-reducing beta-D-glucosyl residues with release of beta-D-glucose.. The protein operates within glucan metabolism; xyloglucan degradation. In terms of biological role, catalyzes the hydrolysis of terminal, non-reducing beta-D-glucosyl residues with release of beta-D-glucose in xyloglucan degradation, leading to remove the backbone 'G' units. The polypeptide is Beta-glucosidase BoGH3A (Bacteroides ovatus (strain ATCC 8483 / DSM 1896 / JCM 5824 / BCRC 10623 / CCUG 4943 / NCTC 11153)).